Consider the following 145-residue polypeptide: Large ribosomal subunit protein uL15 (145 aa).

Residues 20–54 (GRGMASGKGKTATRGHKGQNSRSGGGVRPGFEGGQ) are disordered. Positions 42 to 52 (SGGGVRPGFEG) are enriched in gly residues.

The protein belongs to the universal ribosomal protein uL15 family. As to quaternary structure, part of the 50S ribosomal subunit.

Functionally, binds to the 23S rRNA. In Mycoplasma mycoides subsp. mycoides SC (strain CCUG 32753 / NCTC 10114 / PG1), this protein is Large ribosomal subunit protein uL15.